Consider the following 216-residue polypeptide: Transmembrane emp24 domain-containing protein eca (216 aa).

A signal peptide spans Met-1–Gly-20. Topologically, residues Leu-21 to Ser-182 are lumenal. Positions Arg-30 to Val-126 constitute a GOLD domain. A coiled-coil region spans residues Ala-134–Asn-164. The helical transmembrane segment at Arg-183–Met-203 threads the bilayer. Over Arg-204 to Val-216 the chain is Cytoplasmic. The Prevents secretion from ER motif lies at Lys-213–Val-216.

The protein belongs to the EMP24/GP25L family.

It is found in the endoplasmic reticulum membrane. Functionally, eca and bai are essential, though not redundant, for dorsoventral patterning of the embryo. Specifically required during early embryogenesis for the activity of maternal tkv, while the zygotic tkv is not affected. Involved in Golgi organization. This Drosophila erecta (Fruit fly) protein is Transmembrane emp24 domain-containing protein eca.